Here is a 72-residue protein sequence, read N- to C-terminus: Translation initiation factor IF-1 2 (72 aa).

The region spanning 1-72 (MAKDDVIQMQ…SRARIVFRTK (72 aa)) is the S1-like domain.

It belongs to the IF-1 family. In terms of assembly, component of the 30S ribosomal translation pre-initiation complex which assembles on the 30S ribosome in the order IF-2 and IF-3, IF-1 and N-formylmethionyl-tRNA(fMet); mRNA recruitment can occur at any time during PIC assembly.

It localises to the cytoplasm. Functionally, one of the essential components for the initiation of protein synthesis. Stabilizes the binding of IF-2 and IF-3 on the 30S subunit to which N-formylmethionyl-tRNA(fMet) subsequently binds. Helps modulate mRNA selection, yielding the 30S pre-initiation complex (PIC). Upon addition of the 50S ribosomal subunit IF-1, IF-2 and IF-3 are released leaving the mature 70S translation initiation complex. The protein is Translation initiation factor IF-1 2 of Cupriavidus metallidurans (strain ATCC 43123 / DSM 2839 / NBRC 102507 / CH34) (Ralstonia metallidurans).